Consider the following 205-residue polypeptide: Holliday junction branch migration complex subunit RuvA (205 aa).

The segment at 1 to 64 (MIGRLRGIIL…EDAQLLFGFI (64 aa)) is domain I. The domain II stretch occupies residues 65–143 (HKQERVLFRE…GLSGDLFVPQ (79 aa)). Positions 144-156 (GAGEIPAAIDAPA) are flexible linker. Residues 157–205 (MPADPEGEAVAALVALGYKPQEASRMVSKVASAGSDCEMLIRDALRAAL) form a domain III region.

This sequence belongs to the RuvA family. Homotetramer. Forms an RuvA(8)-RuvB(12)-Holliday junction (HJ) complex. HJ DNA is sandwiched between 2 RuvA tetramers; dsDNA enters through RuvA and exits via RuvB. An RuvB hexamer assembles on each DNA strand where it exits the tetramer. Each RuvB hexamer is contacted by two RuvA subunits (via domain III) on 2 adjacent RuvB subunits; this complex drives branch migration. In the full resolvosome a probable DNA-RuvA(4)-RuvB(12)-RuvC(2) complex forms which resolves the HJ.

It localises to the cytoplasm. Its function is as follows. The RuvA-RuvB-RuvC complex processes Holliday junction (HJ) DNA during genetic recombination and DNA repair, while the RuvA-RuvB complex plays an important role in the rescue of blocked DNA replication forks via replication fork reversal (RFR). RuvA specifically binds to HJ cruciform DNA, conferring on it an open structure. The RuvB hexamer acts as an ATP-dependent pump, pulling dsDNA into and through the RuvAB complex. HJ branch migration allows RuvC to scan DNA until it finds its consensus sequence, where it cleaves and resolves the cruciform DNA. This is Holliday junction branch migration complex subunit RuvA from Sodalis glossinidius (strain morsitans).